We begin with the raw amino-acid sequence, 424 residues long: UDP-N-acetylglucosamine 1-carboxyvinyltransferase (424 aa).

22–23 (KN) serves as a coordination point for phosphoenolpyruvate. Residue Arg-93 coordinates UDP-N-acetyl-alpha-D-glucosamine. Catalysis depends on Cys-117, which acts as the Proton donor. Position 117 is a 2-(S-cysteinyl)pyruvic acid O-phosphothioketal (Cys-117). UDP-N-acetyl-alpha-D-glucosamine-binding positions include 122 to 126 (RPVDL), 162 to 165 (KVSV), Asp-307, and Ile-329.

It belongs to the EPSP synthase family. MurA subfamily.

Its subcellular location is the cytoplasm. It carries out the reaction phosphoenolpyruvate + UDP-N-acetyl-alpha-D-glucosamine = UDP-N-acetyl-3-O-(1-carboxyvinyl)-alpha-D-glucosamine + phosphate. It participates in cell wall biogenesis; peptidoglycan biosynthesis. Cell wall formation. Adds enolpyruvyl to UDP-N-acetylglucosamine. In Haemophilus influenzae (strain PittGG), this protein is UDP-N-acetylglucosamine 1-carboxyvinyltransferase.